The chain runs to 638 residues: Cytoplasmic dynein 1 intermediate chain 2 (638 aa).

Composition is skewed to basic and acidic residues over residues 1 to 13 and 20 to 43; these read MSDKSELKAELER and QIREEKKRKEEERKKKETDQKKEA. 2 disordered regions span residues 1-135 and 155-214; these read MSDK…GRGP and TYTK…EEKQ. Residue Ser-2 is modified to N-acetylserine. Diphosphoserine is present on Ser-51. A phosphoserine mark is found at Ser-51, Ser-73, Trp-81, Pro-84, and Ser-90. A compositionally biased stretch (low complexity) spans 88 to 97; sequence PSSKSVSTPS. Thr-95 carries the phosphothreonine modification. Ser-97, Ser-101, and Ser-104 each carry phosphoserine. The span at 190–214 shows a compositional bias: basic and acidic residues; the sequence is EKTLKKDEENDSKAPPHELTEEEKQ. WD repeat units follow at residues 277 to 326, 330 to 370, 379 to 420, 429 to 469, 474 to 519, 522 to 562, and 568 to 607; these read SKHR…TTPE, HCQS…RTPV, AHTH…HPQD, SKAV…AGIS, GHQG…PLYS, DNAD…EVPT, and EGNPALNRVRWTHSGREIAVGDSEGQIVIYDVGEQIAVPR.

It belongs to the dynein intermediate chain family. Homodimer. The cytoplasmic dynein 1 complex consists of two catalytic heavy chains (HCs) and a number of non-catalytic subunits presented by intermediate chains (ICs), light intermediate chains (LICs) and light chains (LCs); the composition seems to vary in respect to the IC, LIC and LC composition. The heavy chain homodimer serves as a scaffold for the probable homodimeric assembly of the respective non-catalytic subunits. The ICs and LICs bind directly to the HC dimer and the LCs assemble on the IC dimer. Interacts with DYNLT3. Interacts with DYNLT1. Interacts (dephosphorylated at Ser-90) with DCTN1. Interacts with BICD2. Interacts with SPEF2. Interacts with CFAP61. In terms of assembly, (Microbial infection) Interacts with human adenovirus 5 hexon protein; this interaction probably allows virus intracellular transport. In terms of processing, the phosphorylation status of Ser-90 appears to be involved in dynactin-dependent target binding. Post-translationally, pyrophosphorylation by 5-diphosphoinositol pentakisphosphate (5-IP7) promotes interaction with DCTN1. Serine pyrophosphorylation is achieved by Mg(2+)-dependent, but enzyme independent transfer of a beta-phosphate from a inositol pyrophosphate to a pre-phosphorylated serine residue.

The protein localises to the cytoplasm. Its subcellular location is the cytoskeleton. In terms of biological role, acts as one of several non-catalytic accessory components of the cytoplasmic dynein 1 complex that are thought to be involved in linking dynein to cargos and to adapter proteins that regulate dynein function. Cytoplasmic dynein 1 acts as a motor for the intracellular retrograde motility of vesicles and organelles along microtubules. The intermediate chains mediate the binding of dynein to dynactin via its 150 kDa component (p150-glued) DCTN1. Involved in membrane-transport, such as Golgi apparatus, late endosomes and lysosomes. The chain is Cytoplasmic dynein 1 intermediate chain 2 from Homo sapiens (Human).